The sequence spans 265 residues: Hydroxyethylthiazole kinase 2 (265 aa).

Residue methionine 39 participates in substrate binding. Lysine 115 and threonine 168 together coordinate ATP. Glycine 195 is a substrate binding site.

Belongs to the Thz kinase family. Mg(2+) is required as a cofactor.

The enzyme catalyses 5-(2-hydroxyethyl)-4-methylthiazole + ATP = 4-methyl-5-(2-phosphooxyethyl)-thiazole + ADP + H(+). It participates in cofactor biosynthesis; thiamine diphosphate biosynthesis; 4-methyl-5-(2-phosphoethyl)-thiazole from 5-(2-hydroxyethyl)-4-methylthiazole: step 1/1. Functionally, catalyzes the phosphorylation of the hydroxyl group of 4-methyl-5-beta-hydroxyethylthiazole (THZ). The chain is Hydroxyethylthiazole kinase 2 from Clostridium botulinum (strain ATCC 19397 / Type A).